The sequence spans 424 residues: 3-isopropylmalate dehydratase large subunit 2 (424 aa).

Positions 299, 359, and 362 each coordinate [4Fe-4S] cluster.

It belongs to the aconitase/IPM isomerase family. LeuC type 2 subfamily. In terms of assembly, heterodimer of LeuC and LeuD. [4Fe-4S] cluster serves as cofactor.

It catalyses the reaction (2R,3S)-3-isopropylmalate = (2S)-2-isopropylmalate. It functions in the pathway amino-acid biosynthesis; L-leucine biosynthesis; L-leucine from 3-methyl-2-oxobutanoate: step 2/4. Functionally, catalyzes the isomerization between 2-isopropylmalate and 3-isopropylmalate, via the formation of 2-isopropylmaleate. The sequence is that of 3-isopropylmalate dehydratase large subunit 2 from Rubrobacter xylanophilus (strain DSM 9941 / JCM 11954 / NBRC 16129 / PRD-1).